The following is a 492-amino-acid chain: Cobyric acid synthase (492 aa).

The region spanning Val253 to Ala441 is the GATase cobBQ-type domain. Catalysis depends on Cys334, which acts as the Nucleophile. His433 is an active-site residue.

The protein belongs to the CobB/CobQ family. CobQ subfamily.

It participates in cofactor biosynthesis; adenosylcobalamin biosynthesis. In terms of biological role, catalyzes amidations at positions B, D, E, and G on adenosylcobyrinic A,C-diamide. NH(2) groups are provided by glutamine, and one molecule of ATP is hydrogenolyzed for each amidation. This chain is Cobyric acid synthase, found in Azoarcus sp. (strain BH72).